A 266-amino-acid polypeptide reads, in one-letter code: MEIDNQSNSWNDSDCEMDFYLTETINVETTYTSDNDQSTYIYKPIEPVRVNTEMNRVHLVVDFLNLVGEITRSQEDLGFMNLEKRVLDHQLGSKIEVVRIMENIKVFFDSALPTGSKVLLVTKRFGDKQIWNCFKQSFRQILVNPFEPCNQEYELYVAQKSQRFDKEHDDRLTVRLALMLKSEGKRVFVVSNDKYRSMATHWDLDSSFVKVTDDAPTLGQKKIFVISADHFGLDLLRDLHAVKFGFSCNQSTQAQINFLPSTISVM.

This is an uncharacterized protein from Acanthamoeba polyphaga (Amoeba).